The chain runs to 371 residues: 4-hydroxy-3-methylbut-2-en-1-yl diphosphate synthase (flavodoxin) (371 aa).

Residues cysteine 270, cysteine 273, cysteine 305, and glutamate 312 each coordinate [4Fe-4S] cluster.

The protein belongs to the IspG family. Requires [4Fe-4S] cluster as cofactor.

The enzyme catalyses (2E)-4-hydroxy-3-methylbut-2-enyl diphosphate + oxidized [flavodoxin] + H2O + 2 H(+) = 2-C-methyl-D-erythritol 2,4-cyclic diphosphate + reduced [flavodoxin]. It participates in isoprenoid biosynthesis; isopentenyl diphosphate biosynthesis via DXP pathway; isopentenyl diphosphate from 1-deoxy-D-xylulose 5-phosphate: step 5/6. Functionally, converts 2C-methyl-D-erythritol 2,4-cyclodiphosphate (ME-2,4cPP) into 1-hydroxy-2-methyl-2-(E)-butenyl 4-diphosphate. The protein is 4-hydroxy-3-methylbut-2-en-1-yl diphosphate synthase (flavodoxin) of Shewanella sp. (strain ANA-3).